Here is a 367-residue protein sequence, read N- to C-terminus: 2-aminoethylphosphonate--pyruvate transaminase (367 aa).

K194 is modified (N6-(pyridoxal phosphate)lysine).

The protein belongs to the class-V pyridoxal-phosphate-dependent aminotransferase family. PhnW subfamily. As to quaternary structure, homodimer. It depends on pyridoxal 5'-phosphate as a cofactor.

The catalysed reaction is (2-aminoethyl)phosphonate + pyruvate = phosphonoacetaldehyde + L-alanine. Involved in phosphonate degradation. The sequence is that of 2-aminoethylphosphonate--pyruvate transaminase from Salmonella gallinarum (strain 287/91 / NCTC 13346).